Consider the following 371-residue polypeptide: RT1 class I histocompatibility antigen, AA alpha chain (371 aa).

Residues 1 to 24 form the signal peptide; it reads MEAMAPRTLLLLLAAALAPTQTRA. An alpha-1 region spans residues 25–114; the sequence is GSHSLRYFYT…LRGYYNQSEG (90 aa). Residues 25–311 lie on the Extracellular side of the membrane; the sequence is GSHSLRYFYT…PSTDSNMETT (287 aa). Asn110 is a glycosylation site (N-linked (GlcNAc...) asparagine). An alpha-2 region spans residues 115 to 206; sequence GSHTIQEMYG…ELGKETLLRS (92 aa). Residues 207–298 form an alpha-3 region; the sequence is DPPEAHVTLH…GLPKPLSQRW (92 aa). Positions 209-295 constitute an Ig-like C1-type domain; that stretch reads PEAHVTLHPR…EHEGLPKPLS (87 aa). N-linked (GlcNAc...) asparagine glycosylation is present at Asn280. The interval 299–311 is connecting peptide; the sequence is EPSPSTDSNMETT. A helical transmembrane segment spans residues 312–336; sequence VIYVILGAVAMIGAVAIIGAMVAVV. Topologically, residues 337-371 are cytoplasmic; sequence RRRKRNTGGKGGDYAPAPGRDSSQSSDVSLPDCKA. A disordered region spans residues 342 to 371; sequence NTGGKGGDYAPAPGRDSSQSSDVSLPDCKA. Residues Ser362 and Ser365 each carry the phosphoserine modification.

The protein belongs to the MHC class I family. Heterodimer of an alpha chain and a beta chain (beta-2-microglobulin).

It is found in the membrane. Involved in the presentation of foreign antigens to the immune system. The sequence is that of RT1 class I histocompatibility antigen, AA alpha chain from Rattus norvegicus (Rat).